Consider the following 209-residue polypeptide: Uracil phosphoribosyltransferase (209 aa).

5-phospho-alpha-D-ribose 1-diphosphate-binding positions include arginine 79, arginine 104, and 131-139 (DPMLATGAS). Uracil-binding positions include isoleucine 194 and 199 to 201 (GDA). Aspartate 200 provides a ligand contact to 5-phospho-alpha-D-ribose 1-diphosphate.

It belongs to the UPRTase family. Mg(2+) is required as a cofactor.

The catalysed reaction is UMP + diphosphate = 5-phospho-alpha-D-ribose 1-diphosphate + uracil. It functions in the pathway pyrimidine metabolism; UMP biosynthesis via salvage pathway; UMP from uracil: step 1/1. With respect to regulation, allosterically activated by GTP. Its function is as follows. Catalyzes the conversion of uracil and 5-phospho-alpha-D-ribose 1-diphosphate (PRPP) to UMP and diphosphate. This is Uracil phosphoribosyltransferase from Staphylococcus haemolyticus (strain JCSC1435).